The chain runs to 227 residues: MICOS complex subunit Mic19 (227 aa).

A lipid anchor (N-myristoyl glycine) is attached at Gly-2. Ser-29 is modified (phosphoserine). Residues 32–57 (VIDRMKESSPSGSKSQRYSSVYGASV) form a disordered region. The span at 39 to 50 (SSPSGSKSQRYS) shows a compositional bias: polar residues. Tyr-49 is modified (phosphotyrosine). Residues Ser-50, Ser-51, Ser-56, and Ser-58 each carry the phosphoserine modification. The segment at 73–92 (EQAKKESEHQRRLKQARDLE) is disordered. Lys-142 bears the N6-acetyllysine mark. The 43-residue stretch at 180 to 222 (HPVCADLQTKILQCYRQNTQQTLSCSALASQYMHCVNHAKQSM) folds into the CHCH domain. 2 consecutive short sequence motifs (cx9C motif) follow at residues 183-193 (CADLQTKILQC) and 204-214 (CSALASQYMHC). Cystine bridges form between Cys-183–Cys-214 and Cys-193–Cys-204.

Belongs to the MICOS complex subunit Mic19 family. Metazoan Mic19 subfamily. As to quaternary structure, component of the mitochondrial contact site and cristae organizing system (MICOS) complex, composed of at least MICOS10/MIC10, CHCHD3/MIC19, CHCHD6/MIC25, APOOL/MIC27, IMMT/MIC60, APOO/MIC23/MIC26 and MICOS13/MIC13. This complex was also known under the names MINOS or MitOS complex. The MICOS complex associates with mitochondrial outer membrane proteins SAMM50, MTX1 and MTX2 (together described as components of the mitochondrial outer membrane sorting assembly machinery (SAM) complex) and DNAJC11, mitochondrial inner membrane protein TMEM11 and with HSPA9. The MICOS and SAM complexes together with DNAJC11 are part of a large protein complex spanning both membranes termed the mitochondrial intermembrane space bridging (MIB) complex. Interacts with HSPA1A/HSPA1B and OPA1, preferentially with the soluble OPA1 form.

The protein localises to the mitochondrion inner membrane. Its subcellular location is the cytoplasm. It localises to the nucleus. The protein resides in the mitochondrion. In terms of biological role, component of the MICOS complex, a large protein complex of the mitochondrial inner membrane that plays crucial roles in the maintenance of crista junctions, inner membrane architecture, and formation of contact sites to the outer membrane. Has also been shown to function as a transcription factor which binds to the BAG1 promoter and represses BAG1 transcription. Plays an important role in the maintenance of the MICOS complex stability and the mitochondrial cristae morphology. The polypeptide is MICOS complex subunit Mic19 (Chchd3) (Mus musculus (Mouse)).